Consider the following 413-residue polypeptide: Glucose-1-phosphate adenylyltransferase (413 aa).

Alpha-D-glucose 1-phosphate-binding positions include Gly161, 176–177 (EK), and Ser195.

Belongs to the bacterial/plant glucose-1-phosphate adenylyltransferase family. Homotetramer.

The enzyme catalyses alpha-D-glucose 1-phosphate + ATP + H(+) = ADP-alpha-D-glucose + diphosphate. Its pathway is glycan biosynthesis; glycogen biosynthesis. Functionally, involved in the biosynthesis of ADP-glucose, a building block required for the elongation reactions to produce glycogen. Catalyzes the reaction between ATP and alpha-D-glucose 1-phosphate (G1P) to produce pyrophosphate and ADP-Glc. This is Glucose-1-phosphate adenylyltransferase from Anaeromyxobacter dehalogenans (strain 2CP-C).